A 545-amino-acid polypeptide reads, in one-letter code: Membrane protein insertase YidC (545 aa).

A helical membrane pass occupies residues 6–26 (NLLLIALLFVSFMIWQAWQTD). The interval 31–54 (PVAQTTQQTSNPATGDAASSAVPA) is disordered. 4 consecutive transmembrane segments (helical) span residues 342–362 (KFIH…TFIV), 417–437 (LGGC…YYML), 455–475 (LSAQ…MFFI), and 496–516 (PVIF…YYIV).

This sequence belongs to the OXA1/ALB3/YidC family. Type 1 subfamily. Interacts with the Sec translocase complex via SecD. Specifically interacts with transmembrane segments of nascent integral membrane proteins during membrane integration.

The protein resides in the cell inner membrane. Functionally, required for the insertion and/or proper folding and/or complex formation of integral membrane proteins into the membrane. Involved in integration of membrane proteins that insert both dependently and independently of the Sec translocase complex, as well as at least some lipoproteins. Aids folding of multispanning membrane proteins. The sequence is that of Membrane protein insertase YidC from Serratia proteamaculans (strain 568).